Here is a 730-residue protein sequence, read N- to C-terminus: Probable G-protein coupled receptor 149 (730 aa).

Over 1-34 (MSFFLSNLTNDSRLWKVSHNSTDLMNSPETLTLS) the chain is Extracellular. N-linked (GlcNAc...) asparagine glycans are attached at residues asparagine 7, asparagine 10, and asparagine 20. A helical membrane pass occupies residues 35–55 (LFCLICLMTLVALVGSIFSLV). Residues 56-68 (SLLTMQYRTVVSM) are Cytoplasmic-facing. Residues 69–89 (LVTSWSVDDLLSVLSVAIFMV) traverse the membrane as a helical segment. Over 90–108 (LQWPREAPGYFQSLCTTSA) the chain is Extracellular. Cysteine 104 and cysteine 181 are joined by a disulfide. A helical membrane pass occupies residues 109–131 (LLYMCQGLSSNLKATLIVFYNFY). At 132–148 (TMHRTVVSQSSSWRSGQ) the chain is on the cytoplasmic side. Residues 149 to 169 (VLGVALTVWAVSLLLASLPLC) traverse the membrane as a helical segment. The Extracellular segment spans residues 170 to 188 (GWGVFVRTPWGCLTDCSSP). The helical transmembrane segment at 189-209 (YVLLLFAVYASAFGLLAVLSV) threads the bilayer. Over 210–308 (PLTHQLLCSE…SFPVSLAQKR (99 aa)) the chain is Cytoplasmic. The chain crosses the membrane as a helical span at residues 309-329 (FALILALTKVILWLPMMIHMV). Topologically, residues 330-340 (VKHVVGFQSLP) are extracellular. A helical membrane pass occupies residues 341-361 (VDMLSFLLTLLASTVTPVFVL). Topologically, residues 362 to 730 (SKRWAHLPCG…RKREAESKGN (369 aa)) are cytoplasmic.

Belongs to the G-protein coupled receptor 1 family. As to expression, expressed exclusively in brain and testis.

It is found in the cell membrane. Its function is as follows. Orphan receptor. This is Probable G-protein coupled receptor 149 (Gpr149) from Rattus norvegicus (Rat).